The primary structure comprises 81 residues: Photosystem I iron-sulfur center (81 aa).

4Fe-4S ferredoxin-type domains follow at residues A2 to W31 and M39 to Y68. [4Fe-4S] cluster-binding residues include C11, C14, C17, C21, C48, C51, C54, and C58.

As to quaternary structure, the eukaryotic PSI reaction center is composed of at least 11 subunits. [4Fe-4S] cluster is required as a cofactor.

The protein localises to the plastid. The protein resides in the chloroplast thylakoid membrane. The catalysed reaction is reduced [plastocyanin] + hnu + oxidized [2Fe-2S]-[ferredoxin] = oxidized [plastocyanin] + reduced [2Fe-2S]-[ferredoxin]. Its function is as follows. Apoprotein for the two 4Fe-4S centers FA and FB of photosystem I (PSI); essential for photochemical activity. FB is the terminal electron acceptor of PSI, donating electrons to ferredoxin. The C-terminus interacts with PsaA/B/D and helps assemble the protein into the PSI complex. Required for binding of PsaD and PsaE to PSI. PSI is a plastocyanin/cytochrome c6-ferredoxin oxidoreductase, converting photonic excitation into a charge separation, which transfers an electron from the donor P700 chlorophyll pair to the spectroscopically characterized acceptors A0, A1, FX, FA and FB in turn. In Chlamydomonas reinhardtii (Chlamydomonas smithii), this protein is Photosystem I iron-sulfur center.